Reading from the N-terminus, the 525-residue chain is Lysine--tRNA ligase (525 aa).

The 'HIGH' region signature appears at 44 to 52 (PSGLPHIGT). The 'KMSKS' region motif lies at 290 to 294 (KISKS). Lys293 lines the ATP pocket.

The protein belongs to the class-I aminoacyl-tRNA synthetase family.

It is found in the cytoplasm. The enzyme catalyses tRNA(Lys) + L-lysine + ATP = L-lysyl-tRNA(Lys) + AMP + diphosphate. This is Lysine--tRNA ligase from Rickettsia felis (strain ATCC VR-1525 / URRWXCal2) (Rickettsia azadi).